Here is a 129-residue protein sequence, read N- to C-terminus: Profilin-4 (129 aa).

It belongs to the profilin family. Expressed in testis, in seminiferous tubules (at protein level). Expressed in spermatocytes and spermatids, but not in spermatogonium.

Its subcellular location is the cytoplasm. Its function is as follows. Involved in male fertility. Required for manchette development and acrosome biogenesis during spermiogenesis. Binds in vitro to phospholipids, including phosphatidylinositol 3-phosphate (PtdIns(3)P), phosphatidylinositol 4,5-bisphosphate (PtdIns(4,5)P2), phosphatidylinositol 4-phosphate (PtdIns(4)P) and phosphatidic acid (PA). Contrary to other profilin family members, does not bind to actin in vitro. The protein is Profilin-4 (Pfn4) of Rattus norvegicus (Rat).